A 656-amino-acid chain; its full sequence is Chaperone protein DnaK (656 aa).

Positions 590 to 605 are enriched in gly residues; the sequence is GGAAGGAAGGAAGGAA. The interval 590–656 is disordered; that stretch reads GGAAGGAAGG…DGQPKPGPAA (67 aa). A compositionally biased stretch (low complexity) spans 606-621; it reads GDAAGAAGDSTGDAAG. Residues 622-635 are compositionally biased toward gly residues; that stretch reads AAGGPSEGPAGDAG.

The protein belongs to the heat shock protein 70 family.

In terms of biological role, acts as a chaperone. The sequence is that of Chaperone protein DnaK from Cenarchaeum symbiosum (strain A).